Here is a 648-residue protein sequence, read N- to C-terminus: Shugoshin (648 aa).

Coiled-coil stretches lie at residues 95–122 and 208–273; these read LMIK…RLSV and DDRA…KDEA. Disordered regions lie at residues 188 to 239, 262 to 334, 367 to 443, 483 to 518, and 628 to 648; these read KVVG…RSSR, EADK…QEDA, VYRD…RPRR, TNRK…AAED, and HRAR…KVST. 2 stretches are compositionally biased toward basic and acidic residues: residues 200–217 and 262–273; these read VRGE…HQEA and EADKSRSAKDEA. Residues 306–315 show a composition bias toward polar residues; the sequence is ASGTLTQSNE. Composition is skewed to basic and acidic residues over residues 424 to 440 and 490 to 509; these read IVVD…DATR and QREG…HEQD.

Belongs to the shugoshin family.

It is found in the nucleus. Its subcellular location is the chromosome. The protein localises to the centromere. Plays a central role in chromosome cohesion during cell division by preventing premature dissociation of cohesin complex from centromeres after prophase, when most of cohesin complex dissociates from chromosomes arms. May act by protecting RAD21 and or REC8 from cleavage by ESP1/separase. This chain is Shugoshin (SGO1), found in Eremothecium gossypii (strain ATCC 10895 / CBS 109.51 / FGSC 9923 / NRRL Y-1056) (Yeast).